Reading from the N-terminus, the 661-residue chain is UvrABC system protein B (661 aa).

Residues 25–178 (EGILKGEKFQ…DEVIRDLIRM (154 aa)) enclose the Helicase ATP-binding domain. ATP is bound at residue 38 to 45 (GVTGSGKT). The Beta-hairpin motif lies at 91–114 (YYDYYQPEAYIPETDTYIEKDSSI). Residues 429 to 591 (QIDHLIGEIR…IVPQTVRKGI (163 aa)) form the Helicase C-terminal domain. The UVR domain maps to 625–660 (EEYIKELEQEMKKLAIELEFEKAAKVRDKIFELKKL).

It belongs to the UvrB family. As to quaternary structure, forms a heterotetramer with UvrA during the search for lesions. Interacts with UvrC in an incision complex.

It is found in the cytoplasm. In terms of biological role, the UvrABC repair system catalyzes the recognition and processing of DNA lesions. A damage recognition complex composed of 2 UvrA and 2 UvrB subunits scans DNA for abnormalities. Upon binding of the UvrA(2)B(2) complex to a putative damaged site, the DNA wraps around one UvrB monomer. DNA wrap is dependent on ATP binding by UvrB and probably causes local melting of the DNA helix, facilitating insertion of UvrB beta-hairpin between the DNA strands. Then UvrB probes one DNA strand for the presence of a lesion. If a lesion is found the UvrA subunits dissociate and the UvrB-DNA preincision complex is formed. This complex is subsequently bound by UvrC and the second UvrB is released. If no lesion is found, the DNA wraps around the other UvrB subunit that will check the other stand for damage. In Caldicellulosiruptor bescii (strain ATCC BAA-1888 / DSM 6725 / KCTC 15123 / Z-1320) (Anaerocellum thermophilum), this protein is UvrABC system protein B.